The following is a 130-amino-acid chain: Lysozyme C (130 aa).

The 130-residue stretch at 1-130 (KIYERCELAR…LTPYIRGCGV (130 aa)) folds into the C-type lysozyme domain. Intrachain disulfides connect C6/C128, C30/C116, C65/C81, and C77/C95. Catalysis depends on residues E35 and D53.

Belongs to the glycosyl hydrolase 22 family. As to quaternary structure, monomer.

The protein resides in the secreted. It catalyses the reaction Hydrolysis of (1-&gt;4)-beta-linkages between N-acetylmuramic acid and N-acetyl-D-glucosamine residues in a peptidoglycan and between N-acetyl-D-glucosamine residues in chitodextrins.. Its function is as follows. Lysozymes have primarily a bacteriolytic function; those in tissues and body fluids are associated with the monocyte-macrophage system and enhance the activity of immunoagents. This is Lysozyme C (LYZ) from Oryctolagus cuniculus (Rabbit).